A 2185-amino-acid chain; its full sequence is Genome polyprotein (2185 aa).

A lipid anchor (N-myristoyl glycine; by host) is attached at Gly2. Over 2-1495 (GAQVSTQKTG…HVSRAFICLQ (1494 aa)) the chain is Cytoplasmic. Residues 568–584 (FFQGPVEDAITAAIGRV) form an amphipathic alpha-helix region. Residues His872 and Asp890 each act as for protease 2A activity in the active site. Residues Cys907 and Cys909 each coordinate Zn(2+). Catalysis depends on Cys961, which acts as the For protease 2A activity. The Zn(2+) site is built by Cys967 and His969. Residues 1101–1173 (NNSWLKKFTE…EQSAPSQSDQ (73 aa)) are membrane-binding. The tract at residues 1101–1239 (NNSWLKKFTE…SPGAGKSVAT (139 aa)) is oligomerization. Residues 1122 to 1126 (AVKIQ) form an RNA-binding region. The SF3 helicase domain occupies 1205–1361 (EKKMSNYIQF…SMYSQNGKIN (157 aa)). 3 residues coordinate Zn(2+): Cys1369, Cys1381, and Cys1386. The C4-type; degenerate zinc-finger motif lies at 1369–1386 (CDDECCPVNFKKCCPLVC). An RNA-binding region spans residues 1413–1420 (EYNHRHSV). The segment at 1424–1429 (LEALFQ) is oligomerization. An intramembrane segment occupies 1496-1511 (ALTTFVSVAGIIYIIY). Residues 1512–2185 (KLFAGFQGAY…TLRRKWLDSF (674 aa)) lie on the Cytoplasmic side of the membrane. At Tyr1521 the chain carries O-(5'-phospho-RNA)-tyrosine. The Peptidase C3 domain maps to 1541–1719 (GPAFEFAVAM…FSAALLKHYF (179 aa)). Active-site for protease 3C activity residues include His1580, Glu1611, and Cys1687. One can recognise a RdRp catalytic domain in the interval 1950 to 2066 (GHLIAFDYSG…SYPWPIDASL (117 aa)). 2 residues coordinate Mg(2+): Asp1956 and Asp2052.

This sequence belongs to the picornaviruses polyprotein family. Interacts with capsid protein VP1 and capsid protein VP3 to form heterotrimeric protomers. As to quaternary structure, interacts with capsid protein VP0, and capsid protein VP3 to form heterotrimeric protomers. Five protomers subsequently associate to form pentamers which serve as building blocks for the capsid. Interacts with capsid protein VP2, capsid protein VP3 and capsid protein VP4 following cleavage of capsid protein VP0. Interacts with host CD55. Interacts with host CXADR. In terms of assembly, interacts with capsid protein VP1 and capsid protein VP3 in the mature capsid. Interacts with capsid protein VP0 and capsid protein VP1 to form heterotrimeric protomers. Five protomers subsequently associate to form pentamers which serve as building blocks for the capsid. Interacts with capsid protein VP4 in the mature capsid. Interacts with protein 2C; this interaction may be important for virion morphogenesis. As to quaternary structure, interacts with capsid protein VP1 and capsid protein VP3. In terms of assembly, homodimer. Homohexamer; forms a hexameric ring structure with 6-fold symmetry characteristic of AAA+ ATPases. Interacts (via N-terminus) with host RTN3 (via reticulon domain); this interaction is important for viral replication. Interacts with capsid protein VP3; this interaction may be important for virion morphogenesis. As to quaternary structure, interacts with protein 3CD. In terms of assembly, homodimer. Interacts with host GBF1. Interacts (via GOLD domain) with host ACBD3 (via GOLD domain); this interaction allows the formation of a viral protein 3A/ACBD3 heterotetramer with a 2:2 stoichiometry, which will stimulate the recruitment of host PI4KB in order to synthesize PI4P at the viral RNA replication sites. Interacts with RNA-directed RNA polymerase. As to quaternary structure, interacts with host TICAM1 (via C-terminus). In terms of assembly, interacts with protein 3AB and with RNA-directed RNA polymerase. Interacts with Viral protein genome-linked and with protein 3CD. Mg(2+) serves as cofactor. In terms of processing, specific enzymatic cleavages in vivo by the viral proteases yield processing intermediates and the mature proteins. Post-translationally, myristoylation is required for the formation of pentamers during virus assembly. Further assembly of 12 pentamers and a molecule of genomic RNA generates the provirion. During virion maturation, immature virions are rendered infectious following cleavage of VP0 into VP4 and VP2. This maturation seems to be an autocatalytic event triggered by the presence of RNA in the capsid and it is followed by a conformational change infectious virion. In terms of processing, myristoylation is required during RNA encapsidation and formation of the mature virus particle. Post-translationally, VPg is uridylylated by the polymerase into VPg-pUpU. This acts as a nucleotide-peptide primer for the genomic RNA replication.

Its subcellular location is the virion. It is found in the host cytoplasm. The protein localises to the host cytoplasmic vesicle membrane. The protein resides in the host nucleus. The catalysed reaction is a ribonucleoside 5'-triphosphate + H2O = a ribonucleoside 5'-diphosphate + phosphate + H(+). It catalyses the reaction Selective cleavage of Tyr-|-Gly bond in the picornavirus polyprotein.. It carries out the reaction RNA(n) + a ribonucleoside 5'-triphosphate = RNA(n+1) + diphosphate. The enzyme catalyses Selective cleavage of Gln-|-Gly bond in the poliovirus polyprotein. In other picornavirus reactions Glu may be substituted for Gln, and Ser or Thr for Gly.. Its activity is regulated as follows. Replication or transcription is subject to high level of random mutations by the nucleotide analog ribavirin. Functionally, forms an icosahedral capsid of pseudo T=3 symmetry with capsid proteins VP2 and VP3. The capsid is 300 Angstroms in diameter, composed of 60 copies of each capsid protein and enclosing the viral positive strand RNA genome. Capsid protein VP1 mainly forms the vertices of the capsid. Capsid protein VP1 interacts with host CD55 and CXADR to provide virion attachment to target host cells. This attachment induces virion internalization. Tyrosine kinases are probably involved in the entry process. After binding to its receptor, the capsid undergoes conformational changes. Capsid protein VP1 N-terminus (that contains an amphipathic alpha-helix) and capsid protein VP4 are externalized. Together, they shape a pore in the host membrane through which viral genome is translocated to host cell cytoplasm. Forms an icosahedral capsid of pseudo T=3 symmetry with capsid proteins VP2 and VP3. The capsid is 300 Angstroms in diameter, composed of 60 copies of each capsid protein and enclosing the viral positive strand RNA genome. Its function is as follows. Lies on the inner surface of the capsid shell. After binding to the host receptor, the capsid undergoes conformational changes. Capsid protein VP4 is released, Capsid protein VP1 N-terminus is externalized, and together, they shape a pore in the host membrane through which the viral genome is translocated into the host cell cytoplasm. In terms of biological role, component of immature procapsids, which is cleaved into capsid proteins VP4 and VP2 after maturation. Allows the capsid to remain inactive before the maturation step. Functionally, cysteine protease that cleaves viral polyprotein and specific host proteins. It is responsible for the autocatalytic cleavage between the P1 and P2 regions, which is the first cleavage occurring in the polyprotein. Also cleaves the host translation initiation factor EIF4G1, in order to shut down the capped cellular mRNA translation. Inhibits the host nucleus-cytoplasm protein and RNA trafficking by cleaving host members of the nuclear pores. Counteracts stress granule formation probably by antagonizing its assembly or promoting its dissassembly. Cleaves and inhibits host IFIH1/MDA5, thereby inhibiting the type-I IFN production and the establishment of the antiviral state. Cleaves and inhibits host MAVS, thereby inhibiting the type-I IFN production and the establishment of the antiviral state. Plays an essential role in the virus replication cycle by acting as a viroporin. Creates a pore in the host endoplasmic reticulum and as a consequence releases Ca2+ in the cytoplasm of infected cell. In turn, high levels of cytoplasmic calcium may trigger membrane trafficking and transport of viral ER-associated proteins to viroplasms, sites of viral genome replication. Its function is as follows. Induces and associates with structural rearrangements of intracellular membranes. Displays RNA-binding, nucleotide binding and NTPase activities. May play a role in virion morphogenesis and viral RNA encapsidation by interacting with the capsid protein VP3. In terms of biological role, localizes the viral replication complex to the surface of membranous vesicles. Together with protein 3CD binds the Cis-Active RNA Element (CRE) which is involved in RNA synthesis initiation. Acts as a cofactor to stimulate the activity of 3D polymerase, maybe through a nucleid acid chaperone activity. Functionally, localizes the viral replication complex to the surface of membranous vesicles. It inhibits host cell endoplasmic reticulum-to-Golgi apparatus transport and causes the disassembly of the Golgi complex, possibly through GBF1 interaction. This would result in depletion of MHC, trail receptors and IFN receptors at the host cell surface. Plays an essential role in viral RNA replication by recruiting ACBD3 and PI4KB at the viral replication sites, thereby allowing the formation of the rearranged membranous structures where viral replication takes place. Acts as a primer for viral RNA replication and remains covalently bound to viral genomic RNA. VPg is uridylylated prior to priming replication into VPg-pUpU. The oriI viral genomic sequence may act as a template for this. The VPg-pUpU is then used as primer on the genomic RNA poly(A) by the RNA-dependent RNA polymerase to replicate the viral genome. During genome replication, the VPg-RNA linkage is removed by the host TDP2, thereby accelerating replication. During the late stage of the replication cycle, host TDP2 is excluded from sites of viral RNA synthesis and encapsidation, allowing for the generation of progeny virions. Its function is as follows. Involved in the viral replication complex and viral polypeptide maturation. It exhibits protease activity with a specificity and catalytic efficiency that is different from protease 3C. Protein 3CD lacks polymerase activity. Protein 3CD binds to the 5'UTR of the viral genome. In terms of biological role, major viral protease that mediates proteolytic processing of the polyprotein. Cleaves host EIF5B, contributing to host translation shutoff. Cleaves also host PABPC1, contributing to host translation shutoff. Cleaves and inhibits host RIGI, thereby inhibiting the type-I IFN production and the establishment of the antiviral state. Cleaves and inhibits host MAVS, thereby inhibiting the type-I IFN production and the establishment of the antiviral state. Cleaves and inhibits host TICAM1/TRIF, thereby inhibiting the type-I IFN production. Cleaves host NLRP1, triggers host N-glycine-mediated degradation of the autoinhibitory NLRP1 N-terminal fragment. Cleaves host transcription factor TFEB, thereby disrupting host lysosomal functions and enhancing viral infection. Functionally, replicates the viral genomic RNA on the surface of intracellular membranes. May form linear arrays of subunits that propagate along a strong head-to-tail interaction called interface-I. Covalently attaches UMP to a tyrosine of VPg, which is used to prime RNA synthesis. The positive stranded RNA genome is first replicated at virus induced membranous vesicles, creating a dsRNA genomic replication form. This dsRNA is then used as template to synthesize positive stranded RNA genomes. ss(+)RNA genomes are either translated, replicated or encapsidated. This chain is Genome polyprotein, found in Coxsackievirus B3 (strain Nancy).